Here is a 671-residue protein sequence, read N- to C-terminus: UvrABC system protein B (671 aa).

One can recognise a Helicase ATP-binding domain in the interval 25 to 178 (EGIKKGYKHQ…DAMLKKLVEI (154 aa)). An ATP-binding site is contributed by 38 to 45 (GVTGSGKT). Positions 91–114 (YYDYYQPEAYIPETDTYIEKDALI) match the Beta-hairpin motif. The 167-residue stretch at 435-601 (QVEDLLEEIH…TVKSKIKDIL (167 aa)) folds into the Helicase C-terminal domain. The 36-residue stretch at 626 to 661 (EETIKKLEQEMKHAAENLEFEKAAEIRDKIFKIKEK) folds into the UVR domain.

It belongs to the UvrB family. As to quaternary structure, forms a heterotetramer with UvrA during the search for lesions. Interacts with UvrC in an incision complex.

Its subcellular location is the cytoplasm. Functionally, the UvrABC repair system catalyzes the recognition and processing of DNA lesions. A damage recognition complex composed of 2 UvrA and 2 UvrB subunits scans DNA for abnormalities. Upon binding of the UvrA(2)B(2) complex to a putative damaged site, the DNA wraps around one UvrB monomer. DNA wrap is dependent on ATP binding by UvrB and probably causes local melting of the DNA helix, facilitating insertion of UvrB beta-hairpin between the DNA strands. Then UvrB probes one DNA strand for the presence of a lesion. If a lesion is found the UvrA subunits dissociate and the UvrB-DNA preincision complex is formed. This complex is subsequently bound by UvrC and the second UvrB is released. If no lesion is found, the DNA wraps around the other UvrB subunit that will check the other stand for damage. This is UvrABC system protein B from Thermodesulfovibrio yellowstonii (strain ATCC 51303 / DSM 11347 / YP87).